Consider the following 250-residue polypeptide: Anaphase-promoting complex subunit DOC1 (250 aa).

The 187-residue stretch at 60 to 246 folds into the DOC domain; the sequence is PTPENLQHMF…LPETNNVFQD (187 aa).

Belongs to the APC10 family. In terms of assembly, the APC/C is composed of at least 13 subunits that stay tightly associated throughout the cell cycle: APC1, APC2, APC4, APC5, APC9, APC11, CDC16, CDC23, CDC26, CDC27, DOC1, MND2 and SWM1.

It localises to the cytoplasm. It is found in the nucleus. It participates in protein modification; protein ubiquitination. Component of the anaphase promoting complex/cyclosome (APC/C), a cell cycle-regulated E3 ubiquitin-protein ligase complex that controls progression through mitosis and the G1 phase of the cell cycle. The APC/C is thought to confer substrate specificity and, in the presence of ubiquitin-conjugating E2 enzymes, it catalyzes the formation of protein-ubiquitin conjugates that are subsequently degraded by the 26S proteasome. In early mitosis, the APC/C is activated by CDC20 and targets securin PDS1, the B-type cyclin CLB5, and other anaphase inhibitory proteins for proteolysis, thereby triggering the separation of sister chromatids at the metaphase-to-anaphase transition. In late mitosis and in G1, degradation of CLB5 allows activation of the APC/C by CDH1, which is needed to destroy CDC20 and the B-type cyclin CLB2 to allow exit from mitosis and creating the low CDK state necessary for cytokinesis and for reforming prereplicative complexes in G1 prior to another round of replication. DOC1 is required, together with the coactivators CDH1 and CDC20, for recognition and binding of the substrates. The sequence is that of Anaphase-promoting complex subunit DOC1 (DOC1) from Saccharomyces cerevisiae (strain ATCC 204508 / S288c) (Baker's yeast).